The following is a 339-amino-acid chain: MTDNINKESTTTTTTIDHTTNLLIDKHVEYIVKLGSKKDSFEYWVTEHIRMNGMYWGLSSLYLLKSLDKLDKNEVIQWLLSCQKSNGGFGGNTSHDDHLLSTLSAVQILIQYDALDKIDINSVVDYVVKLQREDGSFVGDQWGEVDTRFSYAAIMCLSLLKSLDKINCEKAVEYILSCQNFDGGFGSIPGAESHAGQIFTCVGALSILNEINKIDIDKLGWWLSERQLPNGGLNGRPEKSSDVCYSWWVLSALSAIDRLHWIDNDKLKSYILKCQDNETGGIADKPGDIPDVFHTFFGICGLSLMGYFKDQIESIDPVYALGTKTLQKLGLNLPWNKNL.

PFTB repeat units lie at residues 24–65 (IDKH…YLLK), 72–113 (KNEV…IQYD), 120–161 (INSV…SLLK), 168–209 (CEKA…SILN), 216–257 (IDKL…SAID), and 264–306 (NDKL…SLMG). Residues 194–196 (HAG) and 236–248 (RPEKSSDVCYSWW) each bind geranylgeranyl diphosphate. Residues Asp242, Cys244, and His294 each contribute to the Zn(2+) site.

This sequence belongs to the protein prenyltransferase subunit beta family. In terms of assembly, heterodimer of an alpha and a beta subunit. It depends on Zn(2+) as a cofactor.

The enzyme catalyses geranylgeranyl diphosphate + L-cysteinyl-[protein] = S-geranylgeranyl-L-cysteinyl-[protein] + diphosphate. In terms of biological role, catalyzes the transfer of a geranyl-geranyl moiety from geranyl-geranyl pyrophosphate to both cysteines in Rab proteins with an -XXCC, -XCXC and -CCXX C-terminal. This chain is Probable geranylgeranyl transferase type-2 subunit beta (rabggtb), found in Dictyostelium discoideum (Social amoeba).